Here is a 547-residue protein sequence, read N- to C-terminus: Chaperonin GroEL (547 aa).

ATP is bound by residues 29–32, 86–90, G413, 478–480, and D494; these read TLGP, DGTTT, and DVL.

Belongs to the chaperonin (HSP60) family. Forms a cylinder of 14 subunits composed of two heptameric rings stacked back-to-back. Interacts with the co-chaperonin GroES.

It localises to the cytoplasm. It catalyses the reaction ATP + H2O + a folded polypeptide = ADP + phosphate + an unfolded polypeptide.. Functionally, together with its co-chaperonin GroES, plays an essential role in assisting protein folding. The GroEL-GroES system forms a nano-cage that allows encapsulation of the non-native substrate proteins and provides a physical environment optimized to promote and accelerate protein folding. The sequence is that of Chaperonin GroEL from Alkaliphilus metalliredigens (strain QYMF).